Consider the following 438-residue polypeptide: Nudix hydrolase 19, chloroplastic (438 aa).

Residues 1 to 36 (MLALFLSSSSYPTLSFLSRSVTLNLARTTTLSALTM) constitute a chloroplast transit peptide. Residues Cys212, Cys215, Cys230, and Cys235 each coordinate Zn(2+). Residues Tyr240, 276-278 (AGF), Glu292, Glu296, and Glu342 contribute to the substrate site. The region spanning 241 to 371 (PRVDPVVIML…EYRKAQRTAA (131 aa)) is the Nudix hydrolase domain. Residues Ala276, Glu292, Glu296, and Glu342 each contribute to the Mg(2+) site. A Nudix box motif is present at residues 277-298 (GFIEPGESLEEAVRRETWEETG). The Microbody targeting signal signature appears at 422–424 (PDD).

Belongs to the Nudix hydrolase family. NudC subfamily. The cofactor is Mg(2+). Zn(2+) serves as cofactor. As to expression, expressed in roots, leaves, stems and inflorescences.

It is found in the plastid. The protein localises to the chloroplast. It carries out the reaction a 5'-end NAD(+)-phospho-ribonucleoside in mRNA + H2O = a 5'-end phospho-adenosine-phospho-ribonucleoside in mRNA + beta-nicotinamide D-ribonucleotide + 2 H(+). It catalyses the reaction NAD(+) + H2O = beta-nicotinamide D-ribonucleotide + AMP + 2 H(+). The enzyme catalyses NADH + H2O = reduced beta-nicotinamide D-ribonucleotide + AMP + 2 H(+). Functionally, mRNA decapping enzyme that specifically removes the nicotinamide adenine dinucleotide (NAD) cap from a subset of mRNAs by hydrolyzing the diphosphate linkage to produce nicotinamide mononucleotide (NMN) and 5' monophosphate mRNA. The NAD-cap is present at the 5'-end of some RNAs; in contrast to the canonical N7 methylguanosine (m7G) cap, the NAD cap promotes mRNA decay. Mediates the hydrolysis of some nucleoside diphosphate derivatives. Has a high affinity for NADPH compared with that for NADH. This chain is Nudix hydrolase 19, chloroplastic (NUDT19), found in Arabidopsis thaliana (Mouse-ear cress).